A 426-amino-acid chain; its full sequence is Glutamyl-tRNA reductase (426 aa).

Substrate is bound by residues 49–52 (TCNR), Ser101, 106–108 (EPQ), and Gln112. Cys50 serves as the catalytic Nucleophile. 181–186 (GAGETI) is an NADP(+) binding site. The interval 405-426 (RLFPEKPGYQHPPHSYPDREDR) is disordered.

The protein belongs to the glutamyl-tRNA reductase family. In terms of assembly, homodimer.

The catalysed reaction is (S)-4-amino-5-oxopentanoate + tRNA(Glu) + NADP(+) = L-glutamyl-tRNA(Glu) + NADPH + H(+). Its pathway is porphyrin-containing compound metabolism; protoporphyrin-IX biosynthesis; 5-aminolevulinate from L-glutamyl-tRNA(Glu): step 1/2. Catalyzes the NADPH-dependent reduction of glutamyl-tRNA(Glu) to glutamate 1-semialdehyde (GSA). This chain is Glutamyl-tRNA reductase, found in Xanthomonas axonopodis pv. citri (strain 306).